A 258-amino-acid polypeptide reads, in one-letter code: Imidazole glycerol phosphate synthase subunit HisF (258 aa).

Active-site residues include Asp-11 and Asp-130.

Belongs to the HisA/HisF family. As to quaternary structure, heterodimer of HisH and HisF.

It localises to the cytoplasm. The catalysed reaction is 5-[(5-phospho-1-deoxy-D-ribulos-1-ylimino)methylamino]-1-(5-phospho-beta-D-ribosyl)imidazole-4-carboxamide + L-glutamine = D-erythro-1-(imidazol-4-yl)glycerol 3-phosphate + 5-amino-1-(5-phospho-beta-D-ribosyl)imidazole-4-carboxamide + L-glutamate + H(+). It functions in the pathway amino-acid biosynthesis; L-histidine biosynthesis; L-histidine from 5-phospho-alpha-D-ribose 1-diphosphate: step 5/9. Functionally, IGPS catalyzes the conversion of PRFAR and glutamine to IGP, AICAR and glutamate. The HisF subunit catalyzes the cyclization activity that produces IGP and AICAR from PRFAR using the ammonia provided by the HisH subunit. This is Imidazole glycerol phosphate synthase subunit HisF from Xanthobacter autotrophicus (strain ATCC BAA-1158 / Py2).